Here is a 356-residue protein sequence, read N- to C-terminus: Vesicular integral-membrane protein VIP36 (356 aa).

An N-terminal signal peptide occupies residues 1 to 44 (MAAEGWIWRWGWGRRCLGRPGLPGPGPGPATPLFLLLLLGPVVA). The Lumenal portion of the chain corresponds to 45 to 322 (DITDGNSEHL…FRSGPLTGWR (278 aa)). Residues 52–276 (EHLKREHSLI…DIISMKLFQL (225 aa)) enclose the L-type lectin-like domain. 2 residues coordinate a carbohydrate: Ser-96 and Asp-131. Asp-162, Tyr-164, and Asn-166 together coordinate Ca(2+). Residue 164–166 (YPN) coordinates a carbohydrate. Asn-183 is a glycosylation site (N-linked (GlcNAc...) asparagine). An a carbohydrate-binding site is contributed by His-190. Residue Asp-193 participates in Ca(2+) binding. Cys-202 and Cys-239 are disulfide-bonded. An a carbohydrate-binding site is contributed by 260–262 (GDL). Residues 323–345 (VFLLLLCALLGIIVCAVVGAVVF) form a helical membrane-spanning segment. Topologically, residues 346 to 356 (QKRQERNKRFY) are cytoplasmic.

In terms of assembly, monomer. Ca(2+) is required as a cofactor. Expressed in kidney, liver, intestine, lung, spleen and heart. Low expression in brain.

It is found in the golgi apparatus membrane. Its function is as follows. Plays a role as an intracellular lectin in the early secretory pathway. Interacts with N-acetyl-D-galactosamine and high-mannose type glycans and may also bind to O-linked glycans. Involved in the transport and sorting of glycoproteins carrying high mannose-type glycans. In Canis lupus familiaris (Dog), this protein is Vesicular integral-membrane protein VIP36 (LMAN2).